The chain runs to 334 residues: uncharacterized protein (334 aa).

WD repeat units follow at residues 56–86 (LKGE…KLWT), 98–128 (KPVA…RIWD), 139–169 (GHTS…EGWS), 220–250 (TDQG…RVFN), and 262–291 (LDDG…RVWN).

This is an uncharacterized protein from Synechocystis sp. (strain ATCC 27184 / PCC 6803 / Kazusa).